The chain runs to 286 residues: Probable ketoamine kinase YniA (286 aa).

Position 91 to 93 (91 to 93 (DYL)) interacts with ATP. The active-site Proton acceptor is D193.

Belongs to the fructosamine kinase family.

Functionally, ketoamine kinase that phosphorylates ketoamines on the third carbon of the sugar moiety to generate ketoamine 3-phosphate. Its precise substrate are unknown: does not have ribulosamine and/or erythrulosamine 3-kinase activity in vitro. This is Probable ketoamine kinase YniA (yniA) from Escherichia coli (strain K12).